The following is a 235-amino-acid chain: CMP-N,N'-diacetyllegionaminic acid synthase (235 aa).

Belongs to the CMP-NeuNAc synthase family.

The enzyme catalyses N,N-diacetyllegionaminate + CTP = CMP-N,N-diacetyllegionaminate + diphosphate. Functionally, involved in biosynthesis of legionaminic acid (5,7-diamino-3,5,7,9-tetradeoxy-D-glycero-D-galacto-non-2-ulosonic acid)(Leg), a sialic acid-like derivative that is incorporated into flagellin via O-linkage to Ser/Thr. Catalyzes the conversion of N,N'-diacetyllegionaminic acid (Leg5Ac7Ac) and CTP into CMP-N,N'-diacetyllegionaminic acid (CMP-Leg5Ac7Ac). The sequence is that of CMP-N,N'-diacetyllegionaminic acid synthase (legF) from Campylobacter jejuni subsp. jejuni serotype O:2 (strain ATCC 700819 / NCTC 11168).